Reading from the N-terminus, the 24-residue chain is Brevinin-1Pd (24 aa).

Cys18 and Cys24 are joined by a disulfide.

In terms of tissue distribution, expressed by the skin glands.

Its subcellular location is the secreted. Its function is as follows. Antibacterial activity against Gram-positive bacterium S.aureus and Gram-negative bacterium E.coli. Has activity against C.albicans. This chain is Brevinin-1Pd, found in Lithobates pipiens (Northern leopard frog).